Reading from the N-terminus, the 106-residue chain is A-type ATP synthase subunit F (106 aa).

The protein belongs to the V-ATPase F subunit family. In terms of assembly, has multiple subunits with at least A(3), B(3), C, D, E, F, H, I and proteolipid K(x).

It is found in the cell membrane. Its function is as follows. Component of the A-type ATP synthase that produces ATP from ADP in the presence of a proton gradient across the membrane. The polypeptide is A-type ATP synthase subunit F (Methanosphaera stadtmanae (strain ATCC 43021 / DSM 3091 / JCM 11832 / MCB-3)).